Here is a 265-residue protein sequence, read N- to C-terminus: Small ribosomal subunit protein uS2 (265 aa).

It belongs to the universal ribosomal protein uS2 family.

The protein is Small ribosomal subunit protein uS2 of Microcystis aeruginosa (strain NIES-843 / IAM M-2473).